Here is a 279-residue protein sequence, read N- to C-terminus: Phage-like element PBSX protein XepA (279 aa).

This sequence to B.subtilis YqxG/YqdC.

Functionally, not known; does not seem to be involved in host cell lysis. This chain is Phage-like element PBSX protein XepA (xepA), found in Bacillus subtilis (strain 168).